The primary structure comprises 246 residues: MKFVVFLCAIAAVVATIQGQEQQQQQQLPATIDHDQVKPFPQPQPVTISERAAMKFKPQLHVVDGCHPYPAVNDAGETGGGLKTTGSPTAGCKGSGWGSQVYGRSTWHRDVWAIMYSWYFPKDSPSTGLGHRHDWEHVIVWISNPDVPNPTILAVTPSAHSGYSKYAPPSADTVDGTSIKVRYESTYPMNHATDVTTEAGAFQDLIMWDQMTDAARNALNTVSFGDANVPMNDGNFVPKLDKAWPF.

A signal peptide spans 1–19 (MKFVVFLCAIAAVVATIQG). Residues 113–123 (AIMYSWYFPKD) carry the Conserved undecapeptide motif I motif. A Hepta-peptide GHRHDWE motif II motif is present at residues 130 to 136 (GHRHDWE).

It belongs to the Necrosis inducing protein (NPP1) family.

It localises to the secreted. Functionally, secreted effector that contributes strongly to virulence during infection by P.capsici. Causes large necrotic areas in both host C.annuum and non-host N.benthamiana. The polypeptide is NLP effector protein 2 (Phytophthora capsici).